Here is a 309-residue protein sequence, read N- to C-terminus: Probable manganese-dependent inorganic pyrophosphatase (309 aa).

Mn(2+)-binding residues include H9, D13, D15, D75, H97, and D149.

It belongs to the PPase class C family. Mn(2+) serves as cofactor.

Its subcellular location is the cytoplasm. The catalysed reaction is diphosphate + H2O = 2 phosphate + H(+). This Bacillus cereus (strain B4264) protein is Probable manganese-dependent inorganic pyrophosphatase.